The chain runs to 133 residues: Small ribosomal subunit protein uS8 (133 aa).

Belongs to the universal ribosomal protein uS8 family. In terms of assembly, part of the 30S ribosomal subunit. Contacts proteins S5 and S12.

One of the primary rRNA binding proteins, it binds directly to 16S rRNA central domain where it helps coordinate assembly of the platform of the 30S subunit. This Deinococcus radiodurans (strain ATCC 13939 / DSM 20539 / JCM 16871 / CCUG 27074 / LMG 4051 / NBRC 15346 / NCIMB 9279 / VKM B-1422 / R1) protein is Small ribosomal subunit protein uS8.